The following is a 264-amino-acid chain: Undecaprenyl-diphosphatase 2 (264 aa).

Helical transmembrane passes span 29 to 49 (GSAF…SYFW), 77 to 97 (SWIV…SGVL), 107 to 127 (LTVI…AEIF), 137 to 157 (ASLA…IPGV), 180 to 200 (FSFL…LWEL), 212 to 232 (VLAT…WGLM), and 243 to 263 (FVIY…MGWL).

The protein belongs to the UppP family.

Its subcellular location is the cell inner membrane. The catalysed reaction is di-trans,octa-cis-undecaprenyl diphosphate + H2O = di-trans,octa-cis-undecaprenyl phosphate + phosphate + H(+). In terms of biological role, catalyzes the dephosphorylation of undecaprenyl diphosphate (UPP). Confers resistance to bacitracin. The chain is Undecaprenyl-diphosphatase 2 from Mesorhizobium japonicum (strain LMG 29417 / CECT 9101 / MAFF 303099) (Mesorhizobium loti (strain MAFF 303099)).